Reading from the N-terminus, the 1640-residue chain is Phospholipase D C (1640 aa).

Residues 122–132 (SHRSNQSFNHS) show a composition bias toward polar residues. Disordered stretches follow at residues 122 to 247 (SHRS…KRLS), 264 to 283 (HNQN…HTTT), 439 to 499 (EKQQ…YKYN), and 521 to 541 (DDEY…PSQE). The segment covering 133–193 (NSTTPLNTTN…YSSDNSYLHN (61 aa)) has biased composition (low complexity). Residues 197–231 (DIYEDEDDEDDEDDDDDEDEDDEGKEFEQDDEDES) show a composition bias toward acidic residues. The span at 232–247 (TISSMSLKNSQAKRLS) shows a compositional bias: polar residues. Composition is skewed to low complexity over residues 264 to 273 (HNQNHQNHQN) and 467 to 499 (TTTT…YKYN). Residues 521 to 534 (DDEYYYGEYDDEDD) are compositionally biased toward acidic residues. The PLD phosphodiesterase 1 domain occupies 1009 to 1036 (LYWSHHQKVVVVDQRIAFIGGLDLCFGR). Catalysis depends on residues histidine 1014, lysine 1016, and aspartate 1021. 2 stretches are compositionally biased toward low complexity: residues 1149–1274 (INNN…NNLN) and 1282–1296 (HNNS…QQQQ). The tract at residues 1149-1315 (INNNNNNANN…YQPPLPPQQR (167 aa)) is disordered. Positions 1297–1306 (QHHHHHHHHY) are enriched in basic residues. Residues 1460–1487 (EQIYVHSKVLIVDDKIAIIGSANINDRS) enclose the PLD phosphodiesterase 2 domain. Catalysis depends on residues histidine 1465, lysine 1467, and aspartate 1472.

The protein belongs to the phospholipase D family.

The catalysed reaction is a 1,2-diacyl-sn-glycero-3-phosphocholine + H2O = a 1,2-diacyl-sn-glycero-3-phosphate + choline + H(+). Its activity is regulated as follows. Inhibited by butan-1-ol. Functionally, plays a role in cell growth. Hydrolyzes membrane phospholipids, such as PtdCho (phosphatidylcholine), producing the free headgroup and PtdOH (phosphatidic acid; signaling molecule on its own). Involved in the inhibition of actin-based motility and endocytosis. Its inhibition causes complete collapse of F-actin organization. The chain is Phospholipase D C (pldC) from Dictyostelium discoideum (Social amoeba).